Here is a 130-residue protein sequence, read N- to C-terminus: Flagellar assembly factor FliW (130 aa).

It belongs to the FliW family. Interacts with translational regulator CsrA and flagellin(s).

Its subcellular location is the cytoplasm. Its function is as follows. Acts as an anti-CsrA protein, binds CsrA and prevents it from repressing translation of its target genes, one of which is flagellin. Binds to flagellin and participates in the assembly of the flagellum. The protein is Flagellar assembly factor FliW of Borrelia hermsii (strain HS1 / DAH).